The following is a 62-amino-acid chain: Large ribosomal subunit protein bL28 (62 aa).

It belongs to the bacterial ribosomal protein bL28 family.

In Helicobacter pylori (strain HPAG1), this protein is Large ribosomal subunit protein bL28.